The following is a 175-amino-acid chain: Calcineurin subunit B (175 aa).

4 EF-hand domains span residues 21-56, 58-88, 90-125, and 131-166; these read AEIERLKKRFMKLDKDSSGSIDKTEFMSIPGVSANP, AKRIIEVFDEDNSGDVDFQEFITSLSIFSGR, ETDAKLRFAFRIYDIDKDGYISNGELFIVLKIMVGT, and QLQQIVDRTIMENDVDGDGKLSFEEFKKAAETTEVI. Aspartate 34, aspartate 36, serine 38, serine 40, glutamate 45, aspartate 66, aspartate 68, serine 70, aspartate 72, glutamate 77, aspartate 103, aspartate 105, aspartate 107, tyrosine 109, glutamate 114, aspartate 144, aspartate 146, aspartate 148, lysine 150, and glutamate 155 together coordinate Ca(2+).

This sequence belongs to the calcineurin regulatory subunit family. In terms of assembly, composed of a catalytic subunit (A) and a regulatory subunit (B).

Functionally, regulatory subunit of calcineurin, a calcium-dependent, calmodulin stimulated protein phosphatase. Confers calcium sensitivity. The chain is Calcineurin subunit B (CNB1) from Kluyveromyces lactis (strain ATCC 8585 / CBS 2359 / DSM 70799 / NBRC 1267 / NRRL Y-1140 / WM37) (Yeast).